The primary structure comprises 129 residues: Probable protein cornichon homolog 2 (129 aa).

Helical transmembrane passes span 45-65 (FIVQ…FMTL) and 105-125 (LAYI…SALD).

Belongs to the cornichon family.

The protein resides in the membrane. The polypeptide is Probable protein cornichon homolog 2 (Arabidopsis thaliana (Mouse-ear cress)).